The following is a 197-amino-acid chain: MAKMMGPRFKMCRRLGLNVVGHPKAMKRADRGTSRADKKLSDYGIQLLEKQRLRAYYGVMERQFTRYVDQAFNSKEQPGEALLMILESRLDNMVYRMGFASSIRQARQMVNHGHFLVNGKKVNIPSFRLNIGDEVVLREKSRKTEMFVNNFKDSIGSEVPYVSKEEDNFKGIFTRKPKREEIPITIQEQLIVEFYSK.

The S4 RNA-binding domain occupies 88–150; sequence SRLDNMVYRM…SRKTEMFVNN (63 aa).

This sequence belongs to the universal ribosomal protein uS4 family. Part of the 30S ribosomal subunit. Contacts protein S5. The interaction surface between S4 and S5 is involved in control of translational fidelity.

Functionally, one of the primary rRNA binding proteins, it binds directly to 16S rRNA where it nucleates assembly of the body of the 30S subunit. With S5 and S12 plays an important role in translational accuracy. This chain is Small ribosomal subunit protein uS4B, found in Clostridium perfringens (strain ATCC 13124 / DSM 756 / JCM 1290 / NCIMB 6125 / NCTC 8237 / Type A).